Reading from the N-terminus, the 282-residue chain is NFU1 iron-sulfur cluster scaffold homolog, mitochondrial (282 aa).

The transit peptide at 1 to 27 (MSKLLSYTARIILRNSRITVRQLVRGF) directs the protein to the mitochondrion. Residues 178 to 246 (IKELLDTRIR…IPEVESVEQV (69 aa)) form a nifU region. [4Fe-4S] cluster contacts are provided by cysteine 215 and cysteine 218. The segment at 263-282 (KNLKQKEPAGAPVGIGGGPN) is disordered.

This sequence belongs to the NifU family.

The protein localises to the mitochondrion. In terms of biological role, molecular scaffold for [Fe-S] cluster assembly of mitochondrial iron-sulfur proteins. The polypeptide is NFU1 iron-sulfur cluster scaffold homolog, mitochondrial (Drosophila persimilis (Fruit fly)).